We begin with the raw amino-acid sequence, 322 residues long: MDTSSINAQSIFDDNAATLKLSWLTGHEGWERGFSSESVANATSSADLVGHLNLIHPNRIQVLGDAEIDYYKRQTDEDRSRHMAELIALEPPFLVVAGGVPAPPELVLRCTRSSTPLFTTPMSAAAVIDSLRLYMSRILAPRATLHGVFLDILGMGVLLTGDSGLGKSELGLELISRGHGLVADDAVDFVRLGPDFVEGRCPPLLQNLLEVRGLGLLDIKTIFGETAVRRKMKLKLIVQLVRRPDGEFQRLPLESQTVDVLGLPISKVTIQVAAGRNLAVLVEAAVRNTILQLRGIDTLRDFMDRQRLAMQDPDSQFPGKLI.

Residues histidine 146 and lysine 167 contribute to the active site. Glycine 161–serine 168 serves as a coordination point for ATP. Serine 168 is a binding site for Mg(2+). Residue aspartate 185 is the Proton acceptor; for phosphorylation activity. Proton donor; for dephosphorylation activity of the active site. An important for the catalytic mechanism of both phosphorylation and dephosphorylation region spans residues leucine 209–aspartate 218. A Mg(2+)-binding site is contributed by glutamate 210. Arginine 250 is an active-site residue. The interval glutamine 271–arginine 276 is important for the catalytic mechanism of dephosphorylation.

It belongs to the HPrK/P family. As to quaternary structure, homohexamer. The cofactor is Mg(2+).

The catalysed reaction is [HPr protein]-L-serine + ATP = [HPr protein]-O-phospho-L-serine + ADP + H(+). It catalyses the reaction [HPr protein]-O-phospho-L-serine + phosphate + H(+) = [HPr protein]-L-serine + diphosphate. Catalyzes the ATP- as well as the pyrophosphate-dependent phosphorylation of a specific serine residue in HPr, a phosphocarrier protein of the phosphoenolpyruvate-dependent sugar phosphotransferase system (PTS). HprK/P also catalyzes the pyrophosphate-producing, inorganic phosphate-dependent dephosphorylation (phosphorolysis) of seryl-phosphorylated HPr (P-Ser-HPr). The polypeptide is HPr kinase/phosphorylase (Paraburkholderia xenovorans (strain LB400)).